Consider the following 255-residue polypeptide: Imidazole glycerol phosphate synthase subunit HisF (255 aa).

Residues D11 and D130 contribute to the active site.

It belongs to the HisA/HisF family. As to quaternary structure, heterodimer of HisH and HisF.

The protein localises to the cytoplasm. It catalyses the reaction 5-[(5-phospho-1-deoxy-D-ribulos-1-ylimino)methylamino]-1-(5-phospho-beta-D-ribosyl)imidazole-4-carboxamide + L-glutamine = D-erythro-1-(imidazol-4-yl)glycerol 3-phosphate + 5-amino-1-(5-phospho-beta-D-ribosyl)imidazole-4-carboxamide + L-glutamate + H(+). The protein operates within amino-acid biosynthesis; L-histidine biosynthesis; L-histidine from 5-phospho-alpha-D-ribose 1-diphosphate: step 5/9. Its function is as follows. IGPS catalyzes the conversion of PRFAR and glutamine to IGP, AICAR and glutamate. The HisF subunit catalyzes the cyclization activity that produces IGP and AICAR from PRFAR using the ammonia provided by the HisH subunit. In Campylobacter jejuni (strain RM1221), this protein is Imidazole glycerol phosphate synthase subunit HisF.